The primary structure comprises 412 residues: MIARCKGCSDLLPEDMLRFRYIESIFHDSCITWGYEEVRTPMLEYLSLFTSSGTLTPQMLKRVYSFLDWDGWSGERVVLRPDGTIPAARLYIDSLQEMDVARLCYTSSIFRFDETGKKSRENWQLGAELIGVTSPEANAELITLALETLARLGFEDVELRLSHAQLIKAVLAQLEPNADEQHKIFDQLLDGDIALMSRLETEKPELFRTLKLLMENKGTSASFLKNVMAMAGTAGGELEEPLNDFIAGVDVLDKLGVSYQIDLASGKGFEYYTGVIFHLFVNGEHVGGGGRYDKLIPLLGGPDKPAAGFALYLNRLIPMIDAEDMYDMVEEKILIKYQGDNLKNAYEIANLIRECGISAELFYPGVDTAAYGWAVTVKAEDCYEVTDLIEDKTLELKEQSEVIYLLNGEEDA.

The protein belongs to the class-II aminoacyl-tRNA synthetase family. HisZ subfamily. Heteromultimer composed of HisG and HisZ subunits.

The protein resides in the cytoplasm. The protein operates within amino-acid biosynthesis; L-histidine biosynthesis; L-histidine from 5-phospho-alpha-D-ribose 1-diphosphate: step 1/9. Required for the first step of histidine biosynthesis. May allow the feedback regulation of ATP phosphoribosyltransferase activity by histidine. This chain is ATP phosphoribosyltransferase regulatory subunit, found in Dehalococcoides mccartyi (strain CBDB1).